Here is a 227-residue protein sequence, read N- to C-terminus: Cytochrome c oxidase subunit 2 (227 aa).

Residues 1–14 (MAYSFQLGLQDATS) are Mitochondrial intermembrane-facing. A helical transmembrane segment spans residues 15–45 (PIMEELMNFHDHTLMIVFLISSLVLYIISLM). The Mitochondrial matrix portion of the chain corresponds to 46 to 59 (LTTKLTHTSTMDAQ). Residues 60–87 (EVETIWTILPAVILIMIALPSLRILYMM) form a helical membrane-spanning segment. Residues 88-227 (DEINNPVLTV…HFENWSASMI (140 aa)) lie on the Mitochondrial intermembrane side of the membrane. Cu cation contacts are provided by His-161, Cys-196, Glu-198, Cys-200, His-204, and Met-207. Glu-198 provides a ligand contact to Mg(2+).

This sequence belongs to the cytochrome c oxidase subunit 2 family. As to quaternary structure, component of the cytochrome c oxidase (complex IV, CIV), a multisubunit enzyme composed of 14 subunits. The complex is composed of a catalytic core of 3 subunits MT-CO1, MT-CO2 and MT-CO3, encoded in the mitochondrial DNA, and 11 supernumerary subunits COX4I, COX5A, COX5B, COX6A, COX6B, COX6C, COX7A, COX7B, COX7C, COX8 and NDUFA4, which are encoded in the nuclear genome. The complex exists as a monomer or a dimer and forms supercomplexes (SCs) in the inner mitochondrial membrane with NADH-ubiquinone oxidoreductase (complex I, CI) and ubiquinol-cytochrome c oxidoreductase (cytochrome b-c1 complex, complex III, CIII), resulting in different assemblies (supercomplex SCI(1)III(2)IV(1) and megacomplex MCI(2)III(2)IV(2)). Found in a complex with TMEM177, COA6, COX18, COX20, SCO1 and SCO2. Interacts with TMEM177 in a COX20-dependent manner. Interacts with COX20. Interacts with COX16. The cofactor is Cu cation.

The protein localises to the mitochondrion inner membrane. It catalyses the reaction 4 Fe(II)-[cytochrome c] + O2 + 8 H(+)(in) = 4 Fe(III)-[cytochrome c] + 2 H2O + 4 H(+)(out). Component of the cytochrome c oxidase, the last enzyme in the mitochondrial electron transport chain which drives oxidative phosphorylation. The respiratory chain contains 3 multisubunit complexes succinate dehydrogenase (complex II, CII), ubiquinol-cytochrome c oxidoreductase (cytochrome b-c1 complex, complex III, CIII) and cytochrome c oxidase (complex IV, CIV), that cooperate to transfer electrons derived from NADH and succinate to molecular oxygen, creating an electrochemical gradient over the inner membrane that drives transmembrane transport and the ATP synthase. Cytochrome c oxidase is the component of the respiratory chain that catalyzes the reduction of oxygen to water. Electrons originating from reduced cytochrome c in the intermembrane space (IMS) are transferred via the dinuclear copper A center (CU(A)) of subunit 2 and heme A of subunit 1 to the active site in subunit 1, a binuclear center (BNC) formed by heme A3 and copper B (CU(B)). The BNC reduces molecular oxygen to 2 water molecules using 4 electrons from cytochrome c in the IMS and 4 protons from the mitochondrial matrix. This is Cytochrome c oxidase subunit 2 (MT-CO2) from Praomys jacksoni (African forest rat).